The primary structure comprises 528 residues: Peptide chain release factor 3 (528 aa).

The region spanning Asp-10–His-278 is the tr-type G domain. Residues Ser-19–Thr-26, Asp-87–His-91, and Asn-141–Asp-144 contribute to the GTP site.

The protein belongs to the TRAFAC class translation factor GTPase superfamily. Classic translation factor GTPase family. PrfC subfamily.

The protein resides in the cytoplasm. Its function is as follows. Increases the formation of ribosomal termination complexes and stimulates activities of RF-1 and RF-2. It binds guanine nucleotides and has strong preference for UGA stop codons. It may interact directly with the ribosome. The stimulation of RF-1 and RF-2 is significantly reduced by GTP and GDP, but not by GMP. The polypeptide is Peptide chain release factor 3 (Syntrophobacter fumaroxidans (strain DSM 10017 / MPOB)).